The chain runs to 236 residues: MGQKVHPNGIRLGITKPWNSTWFANTKDFADNLYSDFQVRQFLTKELKNASLSKITIERPAKSIRVTIHTARPGVVIGKKGEDVEKLRKAVAVITGVPAQINISEVRKPELDGKLVADSITSQLERRVMFRRAMKRAVQNAMRLGAKGIKVEVSGRLGGAEIARTEWYREGRVPLHTLRADIDYATSEAHTTYGVIGVKVWIFKGEVLGGLAAVNAAAAQEQAPAKPKRDNKRRGK.

One can recognise a KH type-2 domain in the interval Val-39–Arg-107.

This sequence belongs to the universal ribosomal protein uS3 family. As to quaternary structure, part of the 30S ribosomal subunit. Forms a tight complex with proteins S10 and S14.

In terms of biological role, binds the lower part of the 30S subunit head. Binds mRNA in the 70S ribosome, positioning it for translation. The sequence is that of Small ribosomal subunit protein uS3 from Aeromonas salmonicida (strain A449).